Reading from the N-terminus, the 307-residue chain is Acetaldehyde dehydrogenase 1 (307 aa).

Cys-131 (acyl-thioester intermediate) is an active-site residue. NAD(+)-binding positions include 162–170 (SIGPGTRKN) and Asn-273.

The protein belongs to the acetaldehyde dehydrogenase family.

The catalysed reaction is acetaldehyde + NAD(+) + CoA = acetyl-CoA + NADH + H(+). The polypeptide is Acetaldehyde dehydrogenase 1 (salG) (Metapseudomonas furukawaii (Pseudomonas furukawaii)).